The chain runs to 277 residues: Thymidylate synthase (277 aa).

Arg-21 contacts dUMP. His-51 serves as a coordination point for (6R)-5,10-methylene-5,6,7,8-tetrahydrofolate. 126–127 lines the dUMP pocket; the sequence is RR. The active-site Nucleophile is the Cys-159. Residues 179–182, Asn-190, and 220–222 contribute to the dUMP site; these read RSAD and HLY. Asp-182 is a (6R)-5,10-methylene-5,6,7,8-tetrahydrofolate binding site. Ser-276 contributes to the (6R)-5,10-methylene-5,6,7,8-tetrahydrofolate binding site.

This sequence belongs to the thymidylate synthase family. Bacterial-type ThyA subfamily. Homodimer.

The protein resides in the cytoplasm. It carries out the reaction dUMP + (6R)-5,10-methylene-5,6,7,8-tetrahydrofolate = 7,8-dihydrofolate + dTMP. Its pathway is pyrimidine metabolism; dTTP biosynthesis. In terms of biological role, catalyzes the reductive methylation of 2'-deoxyuridine-5'-monophosphate (dUMP) to 2'-deoxythymidine-5'-monophosphate (dTMP) while utilizing 5,10-methylenetetrahydrofolate (mTHF) as the methyl donor and reductant in the reaction, yielding dihydrofolate (DHF) as a by-product. This enzymatic reaction provides an intracellular de novo source of dTMP, an essential precursor for DNA biosynthesis. The polypeptide is Thymidylate synthase (Hydrogenovibrio crunogenus (strain DSM 25203 / XCL-2) (Thiomicrospira crunogena)).